Reading from the N-terminus, the 294-residue chain is Non-selective voltage-gated ion channel VDAC2 (294 aa).

Ala2 bears the N-acetylalanine mark. Positions 23 and 31 each coordinate ATP. Lys31 carries the post-translational modification N6-acetyllysine; alternate. Lys31 is modified (N6-succinyllysine; alternate). Lys31 participates in a covalent cross-link: Glycyl lysine isopeptide (Lys-Gly) (interchain with G-Cter in ubiquitin); alternate. 2 beta stranded membrane passes run Leu37–Ser46 and Val50–Ser58. A Glycyl lysine isopeptide (Lys-Gly) (interchain with G-Cter in ubiquitin) cross-link involves residue Lys64. Residues Val65 to Trp75 form a beta stranded membrane-spanning segment. Tyr78 carries the post-translational modification Phosphotyrosine. A run of 3 beta stranded transmembrane segments spans residues Leu80–Asn87, Thr91–Asp100, and Leu106–Ser115. Phosphothreonine is present on Thr118. An N6-acetyllysine; alternate modification is found at Lys120. A Glycyl lysine isopeptide (Lys-Gly) (interchain with G-Cter in ubiquitin); alternate cross-link involves residue Lys120. Residue Lys121 forms a Glycyl lysine isopeptide (Lys-Gly) (interchain with G-Cter in ubiquitin) linkage. Transmembrane regions (beta stranded) follow at residues Ser122–Arg131, Ile134–Asp141, Ala148–Gly156, and Leu161–Asp169. Residue Lys172 forms a Glycyl lysine isopeptide (Lys-Gly) (interchain with G-Cter in ubiquitin) linkage. The next 6 membrane-spanning stretches (beta stranded) occupy residues Lys174–Thr186, Phe189–Asn196, Glu200–Val209, Leu213–Thr222, Arg229–Leu238, and Ala242–Asn249. Ser251 is subject to Phosphoserine. Residues Leu253–Gly255 and Ser271–Asp275 contribute to the NAD(+) site. Transmembrane regions (beta stranded) follow at residues Leu253 to Leu262 and Gly265 to Val274. Lys277 is subject to N6-acetyllysine; alternate. A Glycyl lysine isopeptide (Lys-Gly) (interchain with G-Cter in ubiquitin); alternate cross-link involves residue Lys277. A beta stranded membrane pass occupies residues His284–Glu293.

This sequence belongs to the eukaryotic mitochondrial porin family. Monomer, homodimer and higher order oligomers; formation of higher order structures is necessary for scramblase activity. Interacts with ARMC12 in a TBC1D21-dependent manner. Interacts with KLC3. Interacts with SPATA33. Interacts with PPP3CC in a SPATA33-dependent manner. In terms of processing, ubiquitinated by PRKN during mitophagy, leading to its degradation and enhancement of mitophagy. Deubiquitinated by USP30.

The protein resides in the mitochondrion outer membrane. The protein localises to the membrane. The enzyme catalyses chloride(in) = chloride(out). The catalysed reaction is K(+)(in) = K(+)(out). It carries out the reaction a 1,2-diacyl-sn-glycero-3-phospho-L-serine(in) = a 1,2-diacyl-sn-glycero-3-phospho-L-serine(out). It catalyses the reaction a 1,2-diacyl-sn-glycero-3-phosphocholine(in) = a 1,2-diacyl-sn-glycero-3-phosphocholine(out). The enzyme catalyses a 1,2-diacyl-sn-glycero-3-phospho-(1D-myo-inositol)(in) = a 1,2-diacyl-sn-glycero-3-phospho-(1D-myo-inositol)(out). Its function is as follows. Non-selective voltage-gated ion channel that mediates the transport of anions and cations through the mitochondrion outer membrane and plasma membrane. The channel adopts an open conformation at zero mV and a closed conformation at both positive and negative potentials. There are two populations of channels; the main that functions in a lower open-state conductance with lower ion selectivity, that switch, in a voltage-dependent manner, from the open to a low-conducting 'closed' state and the other that has a normal ion selectivity in the typical high conductance, 'open' state. Binds various lipids, including the sphingolipid ceramide, the phospholipid phosphatidylcholine, and the sterols cholesterol and oxysterol. Binding of ceramide promotes the mitochondrial outer membrane permeabilization (MOMP) apoptotic pathway. In terms of biological role, catalyzes the scrambling of phospholipids across the outer mitochondrial membrane; the mechanism is unrelated to channel activity and is capable of translocating both anionic and zwitterionic phospholipids. This chain is Non-selective voltage-gated ion channel VDAC2, found in Oryctolagus cuniculus (Rabbit).